We begin with the raw amino-acid sequence, 329 residues long: Ketol-acid reductoisomerase (NADP(+)) (329 aa).

The KARI N-terminal Rossmann domain maps to 1-181 (MKVYYENDAD…GATRSGVLQT (181 aa)). NADP(+) is bound by residues 24–27 (YGSQ), Arg47, and 82–85 (DQVQ). His107 is an active-site residue. Gly133 provides a ligand contact to NADP(+). One can recognise a KARI C-terminal knotted domain in the interval 182–327 (TFREETETDL…GELRKMMSWL (146 aa)). Residues Asp190, Glu194, Glu226, and Glu230 each coordinate Mg(2+). Ser251 lines the substrate pocket.

The protein belongs to the ketol-acid reductoisomerase family. Mg(2+) is required as a cofactor.

The catalysed reaction is (2R)-2,3-dihydroxy-3-methylbutanoate + NADP(+) = (2S)-2-acetolactate + NADPH + H(+). It catalyses the reaction (2R,3R)-2,3-dihydroxy-3-methylpentanoate + NADP(+) = (S)-2-ethyl-2-hydroxy-3-oxobutanoate + NADPH + H(+). Its pathway is amino-acid biosynthesis; L-isoleucine biosynthesis; L-isoleucine from 2-oxobutanoate: step 2/4. It participates in amino-acid biosynthesis; L-valine biosynthesis; L-valine from pyruvate: step 2/4. Functionally, involved in the biosynthesis of branched-chain amino acids (BCAA). Catalyzes an alkyl-migration followed by a ketol-acid reduction of (S)-2-acetolactate (S2AL) to yield (R)-2,3-dihydroxy-isovalerate. In the isomerase reaction, S2AL is rearranged via a Mg-dependent methyl migration to produce 3-hydroxy-3-methyl-2-ketobutyrate (HMKB). In the reductase reaction, this 2-ketoacid undergoes a metal-dependent reduction by NADPH to yield (R)-2,3-dihydroxy-isovalerate. In Maridesulfovibrio salexigens (strain ATCC 14822 / DSM 2638 / NCIMB 8403 / VKM B-1763) (Desulfovibrio salexigens), this protein is Ketol-acid reductoisomerase (NADP(+)).